The sequence spans 121 residues: MPTIQQLIRSSRKKITKKTKSPALKMCPQRRGVCSRVYTTTPKKPNSALRKVARIKLTSGFEVTAYIPGIGHNLQEHSVVLIRGGRVKDLPGVRYHIIRGTLDTSAVKDRIRSRSKYGVSK.

The protein belongs to the universal ribosomal protein uS12 family. In terms of assembly, part of the 30S ribosomal subunit.

It is found in the plastid. The protein resides in the chloroplast. Its function is as follows. With S4 and S5 plays an important role in translational accuracy. Located at the interface of the 30S and 50S subunits. This chain is Small ribosomal subunit protein uS12c (rps12), found in Bigelowiella natans (Pedinomonas minutissima).